Reading from the N-terminus, the 338-residue chain is 1-aminocyclopropane-1-carboxylate deaminase (338 aa).

Lys51 carries the N6-(pyridoxal phosphate)lysine modification. Ser78 (nucleophile) is an active-site residue.

The protein belongs to the ACC deaminase/D-cysteine desulfhydrase family. Homotrimer. The cofactor is pyridoxal 5'-phosphate.

The enzyme catalyses 1-aminocyclopropane-1-carboxylate + H2O = 2-oxobutanoate + NH4(+). Functionally, catalyzes a cyclopropane ring-opening reaction, the irreversible conversion of 1-aminocyclopropane-1-carboxylate (ACC) to ammonia and alpha-ketobutyrate. Allows growth on ACC as a nitrogen source. The polypeptide is 1-aminocyclopropane-1-carboxylate deaminase (Burkholderia pseudomallei (strain 1710b)).